The following is a 239-amino-acid chain: Ribonuclease HII (239 aa).

Positions 30–221 (GPVAGVDEVG…VRRVATRSNG (192 aa)) constitute an RNase H type-2 domain. Aspartate 36, glutamate 37, and aspartate 130 together coordinate a divalent metal cation. The disordered stretch occupies residues 219-239 (SNGAAAAEREADPPQERDGTG). Residues 225 to 239 (AEREADPPQERDGTG) show a composition bias toward basic and acidic residues.

Belongs to the RNase HII family. It depends on Mn(2+) as a cofactor. Requires Mg(2+) as cofactor.

It localises to the cytoplasm. It catalyses the reaction Endonucleolytic cleavage to 5'-phosphomonoester.. Its function is as follows. Endonuclease that specifically degrades the RNA of RNA-DNA hybrids. The protein is Ribonuclease HII of Mycobacterium marinum (strain ATCC BAA-535 / M).